A 185-amino-acid polypeptide reads, in one-letter code: Iodate reductase subunit IdrB (185 aa).

Residues 1-46 constitute a signal peptide (tat-type signal); it reads MTTHPIHLHHDDPAHGGERACMSRRSFLLAGGAMVTLASLPGTAVA. One can recognise a Rieske domain in the interval 69–168; that stretch reads GEPLEFAYPY…LEVRGDDIYA (100 aa). [2Fe-2S] cluster-binding residues include cysteine 109, histidine 111, cysteine 130, and histidine 133.

It belongs to the AOX family. In terms of assembly, the iodate reductase (Idr) complex is composed of a molybdopterin-dependent iodate reductase (IdrA and IdrB subunits) and two associated peroxidases (IdrP1 and IdrP2). [2Fe-2S] cluster serves as cofactor. In terms of processing, predicted to be exported by the Tat system. The position of the signal peptide cleavage has not been experimentally proven.

It is found in the periplasm. Its function is as follows. Involved in iodate respiration. May accept electrons from cytochrome c551, and catalyze the reduction of iodate (IO(3)(-)) to produce the chemically unstable intermediate hypoiodous acid (HIO). This intermediate then undergoes abiotic disproportionation to yield two molecules of iodide (I(-)) and one molecule of iodate. The resultant iodate subsequently cycles back into the reductive pathway. The initial reduction of iodate may inadvertently produce low levels of incidental toxic H(2)O(2), which is detoxified by IdrP1 and IdrP2. The chain is Iodate reductase subunit IdrB from Denitromonas iodatirespirans.